The chain runs to 182 residues: uncharacterized protein (182 aa).

Positions 36 to 164 (LRHRATYIVV…TPDSLKALSL (129 aa)) constitute a Nudix hydrolase domain. The Nudix box motif lies at 73-95 (GGVVQSGENYLESARREAEEELG). Mg(2+) is bound by residues glutamate 89 and glutamate 93.

It belongs to the Nudix hydrolase family. Mg(2+) is required as a cofactor.

This is an uncharacterized protein from Yersinia pestis.